A 410-amino-acid polypeptide reads, in one-letter code: Aspartic proteinase Asp1 (410 aa).

The first 23 residues, Met-1 to Ala-23, serve as a signal peptide directing secretion. A propeptide spans Val-24–Asp-46 (removed in mature form). In terms of domain architecture, Peptidase A1 spans Phe-38–Val-392. Catalysis depends on residues Asp-56 and Asp-257.

This sequence belongs to the peptidase A1 family. In terms of tissue distribution, expressed in pollen, nucellus, ovary wall, shoot and root meristem, coleoptiles of immature seeds, and somatic embryos.

Its function is as follows. Possesses protease activity in vitro. This is Aspartic proteinase Asp1 (ASP1) from Oryza sativa subsp. indica (Rice).